Here is a 267-residue protein sequence, read N- to C-terminus: 2-dehydro-3-deoxyphosphooctonate aldolase (267 aa).

The protein belongs to the KdsA family.

It localises to the cytoplasm. The catalysed reaction is D-arabinose 5-phosphate + phosphoenolpyruvate + H2O = 3-deoxy-alpha-D-manno-2-octulosonate-8-phosphate + phosphate. It functions in the pathway carbohydrate biosynthesis; 3-deoxy-D-manno-octulosonate biosynthesis; 3-deoxy-D-manno-octulosonate from D-ribulose 5-phosphate: step 2/3. The protein operates within bacterial outer membrane biogenesis; lipopolysaccharide biosynthesis. This is 2-dehydro-3-deoxyphosphooctonate aldolase from Campylobacter jejuni subsp. doylei (strain ATCC BAA-1458 / RM4099 / 269.97).